A 503-amino-acid chain; its full sequence is UDP-N-acetylmuramoyl-L-alanyl-D-glutamate--2,6-diaminopimelate ligase (503 aa).

S32 contributes to the UDP-N-acetyl-alpha-D-muramoyl-L-alanyl-D-glutamate binding site. 117 to 123 (GTNGKTT) is an ATP binding site. Residues 159 to 160 (TT), S186, Q192, and R194 contribute to the UDP-N-acetyl-alpha-D-muramoyl-L-alanyl-D-glutamate site. An N6-carboxylysine modification is found at K226. Meso-2,6-diaminopimelate-binding positions include R396, 420-423 (DNPR), G471, and E475. The short motif at 420 to 423 (DNPR) is the Meso-diaminopimelate recognition motif element.

Belongs to the MurCDEF family. MurE subfamily. The cofactor is Mg(2+). Post-translationally, carboxylation is probably crucial for Mg(2+) binding and, consequently, for the gamma-phosphate positioning of ATP.

The protein resides in the cytoplasm. The catalysed reaction is UDP-N-acetyl-alpha-D-muramoyl-L-alanyl-D-glutamate + meso-2,6-diaminopimelate + ATP = UDP-N-acetyl-alpha-D-muramoyl-L-alanyl-gamma-D-glutamyl-meso-2,6-diaminopimelate + ADP + phosphate + H(+). The protein operates within cell wall biogenesis; peptidoglycan biosynthesis. Its function is as follows. Catalyzes the addition of meso-diaminopimelic acid to the nucleotide precursor UDP-N-acetylmuramoyl-L-alanyl-D-glutamate (UMAG) in the biosynthesis of bacterial cell-wall peptidoglycan. The chain is UDP-N-acetylmuramoyl-L-alanyl-D-glutamate--2,6-diaminopimelate ligase from Prochlorococcus marinus (strain SARG / CCMP1375 / SS120).